The chain runs to 765 residues: E3 ubiquitin-protein ligase SMURF2 (765 aa).

A C2 domain is found at 1-117; that stretch reads MSNQGVRRNG…KDTGYQRLDL (117 aa). WW domains follow at residues 157–190, 251–284, and 297–330; these read NDLP…RPTR, PDLP…DPRV, and GPLP…DPRL. Positions 341-375 are disordered; that stretch reads SPNGSRAAVEAQSSSRPGQLKEQAQSVVSPGNLPE. A compositionally biased stretch (polar residues) spans 351-369; the sequence is AQSSSRPGQLKEQAQSVVS. Residues 431 to 765 form the HECT domain; the sequence is RPKDLWKRLM…IEETCGFAVE (335 aa). C733 (glycyl thioester intermediate) is an active-site residue.

It localises to the nucleus. It is found in the cytoplasm. Its subcellular location is the cell membrane. The protein resides in the membrane raft. The enzyme catalyses S-ubiquitinyl-[E2 ubiquitin-conjugating enzyme]-L-cysteine + [acceptor protein]-L-lysine = [E2 ubiquitin-conjugating enzyme]-L-cysteine + N(6)-ubiquitinyl-[acceptor protein]-L-lysine.. It functions in the pathway protein modification; protein ubiquitination. E3 ubiquitin-protein ligase which accepts ubiquitin from an E2 ubiquitin-conjugating enzyme in the form of a thioester and then directly transfers the ubiquitin to targeted substrates. The sequence is that of E3 ubiquitin-protein ligase SMURF2 (smurf2) from Danio rerio (Zebrafish).